The sequence spans 171 residues: Adenine phosphoribosyltransferase (171 aa).

Belongs to the purine/pyrimidine phosphoribosyltransferase family. In terms of assembly, homodimer.

It localises to the cytoplasm. The enzyme catalyses AMP + diphosphate = 5-phospho-alpha-D-ribose 1-diphosphate + adenine. It participates in purine metabolism; AMP biosynthesis via salvage pathway; AMP from adenine: step 1/1. In terms of biological role, catalyzes a salvage reaction resulting in the formation of AMP, that is energically less costly than de novo synthesis. The polypeptide is Adenine phosphoribosyltransferase (Solidesulfovibrio magneticus (strain ATCC 700980 / DSM 13731 / RS-1) (Desulfovibrio magneticus)).